The primary structure comprises 553 residues: Glucose-6-phosphate isomerase (553 aa).

Glutamate 357 functions as the Proton donor in the catalytic mechanism. Catalysis depends on residues histidine 388 and lysine 514. Residues 527-553 (ADSPAAQSDSSTDALVRRYRTERGRTA) form a disordered region. A compositionally biased stretch (basic and acidic residues) spans 541 to 553 (LVRRYRTERGRTA).

This sequence belongs to the GPI family.

The protein localises to the cytoplasm. It catalyses the reaction alpha-D-glucose 6-phosphate = beta-D-fructose 6-phosphate. It functions in the pathway carbohydrate biosynthesis; gluconeogenesis. The protein operates within carbohydrate degradation; glycolysis; D-glyceraldehyde 3-phosphate and glycerone phosphate from D-glucose: step 2/4. Catalyzes the reversible isomerization of glucose-6-phosphate to fructose-6-phosphate. This chain is Glucose-6-phosphate isomerase, found in Mycolicibacterium vanbaalenii (strain DSM 7251 / JCM 13017 / BCRC 16820 / KCTC 9966 / NRRL B-24157 / PYR-1) (Mycobacterium vanbaalenii).